Reading from the N-terminus, the 60-residue chain is MAQIKITLTKSPIGRKPEQRKTVVALGLGKLNSSVIKEDNAAIRGMVTAISHLVTVEDVK.

Belongs to the universal ribosomal protein uL30 family. As to quaternary structure, part of the 50S ribosomal subunit.

This chain is Large ribosomal subunit protein uL30, found in Streptococcus equi subsp. equi (strain 4047).